The chain runs to 232 residues: Protein G1-like3 (232 aa).

Disordered stretches follow at residues 20-77 (AGLL…YEAQ) and 189-232 (ARAR…GAAC). Gly residues predominate over residues 38-53 (AGGGGGGGGDGAGGSS). Residues 73 to 200 (RYEAQKRRDW…ARGVSYEKKK (128 aa)) enclose the ALOG domain. The Nuclear localization signal motif lies at 198-202 (KKKRK). The segment covering 216–232 (PHPPPPPPPPPSAGAAC) has biased composition (pro residues).

The protein belongs to the plant homeotic and developmental regulators ALOG protein family.

The protein resides in the nucleus. Functionally, probable transcription regulator that acts as a developmental regulator by promoting cell growth in response to light. In Oryza sativa subsp. indica (Rice), this protein is Protein G1-like3.